Consider the following 480-residue polypeptide: MVKICCIGAGYVGGPTMAVIALKCPAIEVVVVDISKPRIDAWNSEQLPIYEPGLDEVVKECRGRNLFFSTDVEKHVAEANIIFVSVNTPTKTRGLGAGKAADLTYWESAARMIADVSKSDKIVVEKSTVPVKTAEAIEKILTHNSKGINYQILSNPEFLAEGTAIEDLFKPDRVLIGGRETPEGKKAVQALKEVYAHWVPEDRIITTNLWSAELSKLAANAFLAQRISSVNAISALCEATGANVAEVAYSVGKDSRIGPKFLNASVGFGGSCFQKDILNLVYICECNGLPEVANYWKQVIKINDYQKSRFVNRVVSSMFNTVSGKKIAVLGFAFKKDTGDTRETPAIDVCHGLLGDKAQISIYDPQVTEDQIQRDLAMSKFDWDHPMHLQPTSPTAFKQVSVVWDAYEATKGAHGVCILTEWDEFKTLDYQKIFDNMQKPAFVFDGRNVVDAEKLREIGFIVYSIGKPLDAWLKDMPAVA.

NAD(+)-binding positions include 8-13 (GAGYVG), aspartate 33, arginine 38, 86-90 (VNTPT), 127-128 (ST), and glutamate 161. Substrate-binding positions include 157–161 (EFLAE), 216–223 (KLAANAFL), and 256–269 (RIGP…VGFG). The Nucleophile role is filled by cysteine 272. Residue 272–275 (CFQK) participates in NAD(+) binding. 334–335 (FK) provides a ligand contact to substrate. Arginine 342 provides a ligand contact to NAD(+). The residue at position 393 (serine 393) is a Phosphoserine. Arginine 447 lines the substrate pocket.

This sequence belongs to the UDP-glucose/GDP-mannose dehydrogenase family.

It catalyses the reaction UDP-alpha-D-glucose + 2 NAD(+) + H2O = UDP-alpha-D-glucuronate + 2 NADH + 3 H(+). It functions in the pathway nucleotide-sugar biosynthesis; UDP-alpha-D-glucuronate biosynthesis; UDP-alpha-D-glucuronate from UDP-alpha-D-glucose: step 1/1. Its function is as follows. Involved in the biosynthesis of UDP-glucuronic acid (UDP-GlcA), providing nucleotide sugars for cell-wall polymers. The chain is UDP-glucose 6-dehydrogenase 4 (UGD4) from Oryza sativa subsp. japonica (Rice).